A 323-amino-acid polypeptide reads, in one-letter code: tRNA uridine(34) hydroxylase (323 aa).

The 95-residue stretch at serine 123–serine 217 folds into the Rhodanese domain. The active-site Cysteine persulfide intermediate is the cysteine 177.

Belongs to the TrhO family.

The enzyme catalyses uridine(34) in tRNA + AH2 + O2 = 5-hydroxyuridine(34) in tRNA + A + H2O. Its function is as follows. Catalyzes oxygen-dependent 5-hydroxyuridine (ho5U) modification at position 34 in tRNAs. The chain is tRNA uridine(34) hydroxylase from Methylobacillus flagellatus (strain ATCC 51484 / DSM 6875 / VKM B-1610 / KT).